Here is a 219-residue protein sequence, read N- to C-terminus: FMN-dependent NADH:quinone oxidoreductase 2 (219 aa).

FMN contacts are provided by residues serine 10 and 23 to 25; that span reads SIS.

This sequence belongs to the azoreductase type 1 family. As to quaternary structure, homodimer. FMN serves as cofactor.

It carries out the reaction 2 a quinone + NADH + H(+) = 2 a 1,4-benzosemiquinone + NAD(+). It catalyses the reaction N,N-dimethyl-1,4-phenylenediamine + anthranilate + 2 NAD(+) = 2-(4-dimethylaminophenyl)diazenylbenzoate + 2 NADH + 2 H(+). Quinone reductase that provides resistance to thiol-specific stress caused by electrophilic quinones. In terms of biological role, also exhibits azoreductase activity. Catalyzes the reductive cleavage of the azo bond in aromatic azo compounds to the corresponding amines. In Colwellia psychrerythraea (strain 34H / ATCC BAA-681) (Vibrio psychroerythus), this protein is FMN-dependent NADH:quinone oxidoreductase 2.